The primary structure comprises 111 residues: Urease subunit beta (111 aa).

It belongs to the urease beta subunit family. Heterotrimer of UreA (gamma), UreB (beta) and UreC (alpha) subunits. Three heterotrimers associate to form the active enzyme.

It localises to the cytoplasm. It catalyses the reaction urea + 2 H2O + H(+) = hydrogencarbonate + 2 NH4(+). Its pathway is nitrogen metabolism; urea degradation; CO(2) and NH(3) from urea (urease route): step 1/1. The chain is Urease subunit beta from Geobacillus kaustophilus (strain HTA426).